The following is a 4306-amino-acid chain: Cytoplasmic dynein 2 heavy chain 1 (4306 aa).

The tract at residues 1-1650 is stem; sequence MAGSLSDVRK…YVQMVDSELQ (1650 aa). 145–152 provides a ligand contact to ATP; that stretch reads LGVVLRKS. Residues 669-696 adopt a coiled-coil conformation; that stretch reads KELEGYIQKLQNAAERLATENRRLRKWH. AAA regions lie at residues 1651 to 1875, 1941 to 2161, 2249 to 2505, and 2617 to 2862; these read YTYE…VLRG, SALK…KQND, LTAD…WVLG, and HYGR…ESCK. ATP contacts are provided by residues 1689 to 1696, 1979 to 1986, 2291 to 2298, and 2655 to 2662; these read GPAGTGKT, GPSGAGKS, GPEGCGKG, and GRSGVGRR. Positions 2880-3168 are stalk; that stretch reads AISSSKRKEL…AEVSKAQETI (289 aa). 3 coiled-coil regions span residues 2896 to 2981, 3108 to 3199, and 3407 to 3441; these read LQAG…KEVQ, LETE…LATL, and IQHE…SLLE. AAA stretches follow at residues 3243–3472 and 3689–3904; these read LCTE…LIQD and MALF…VIDR.

This sequence belongs to the dynein heavy chain family. In terms of assembly, the cytoplasmic dynein complex 2 is probably composed by a heavy chain DYNC2H1 homodimer and a number of DYNC2LI1 light intermediate chains. As to expression, widely expressed both in ciliated and unciliated tissues. Detected in brain and testis (at protein level).

Its subcellular location is the cytoplasm. The protein resides in the cytoskeleton. The protein localises to the cilium axoneme. It is found in the cell membrane. In terms of biological role, may function as a motor for intraflagellar retrograde transport. Functions in cilia biogenesis. May play a role in transport between endoplasmic reticulum and Golgi or organization of the Golgi in cells. This Rattus norvegicus (Rat) protein is Cytoplasmic dynein 2 heavy chain 1 (Dync2h1).